Consider the following 101-residue polypeptide: Small ribosomal subunit protein uS14 (101 aa).

The protein belongs to the universal ribosomal protein uS14 family. As to quaternary structure, part of the 30S ribosomal subunit. Contacts proteins S3 and S10.

In terms of biological role, binds 16S rRNA, required for the assembly of 30S particles and may also be responsible for determining the conformation of the 16S rRNA at the A site. The protein is Small ribosomal subunit protein uS14 of Gluconobacter oxydans (strain 621H) (Gluconobacter suboxydans).